A 410-amino-acid polypeptide reads, in one-letter code: Angiopoietin-related protein 4 (410 aa).

The first 23 residues, 1–23, serve as a signal peptide directing secretion; the sequence is MRCAPTAGAALMLCAATAGLLSA. The segment at 81-106 is disordered; the sequence is KDPEGSAAPPRAQANLVNPGGGDASP. A coiled-coil region spans residues 107–155; that stretch reads ETLRSLKTQLEAQNSRIQQLFQKVAQQQRHLEKQQLRIQNLQSQMDHLA. An N-linked (GlcNAc...) asparagine glycan is attached at asparagine 184. The 223-residue stretch at 186–408 folds into the Fibrinogen C-terminal domain; it reads SRLHRLPRDC…ATTILVQPTA (223 aa). Intrachain disulfides connect cysteine 195–cysteine 223 and cysteine 348–cysteine 361.

Homooligomer; disulfide-linked via Cys residues in the N-terminal part of the protein. The homooligomer undergoes proteolytic processing to release the ANGPTL4 C-terminal chain, which circulates as a monomer. The homooligomer unprocessed form is able to interact with the extracellular matrix. N-glycosylated. Post-translationally, forms disulfide-linked dimers and tetramers. In terms of processing, cleaved into a smaller N-terminal chain and a larger chain that contains the fibrinogen C-terminal domain; both cleaved and uncleaved forms are detected in the extracellular space. The cleaved form is not present within the cell.

The protein resides in the secreted. Its subcellular location is the extracellular space. It localises to the extracellular matrix. Functionally, mediates inactivation of the lipoprotein lipase LPL, and thereby plays a role in the regulation of triglyceride clearance from the blood serum and in lipid metabolism. May also play a role in regulating glucose homeostasis and insulin sensitivity. Inhibits proliferation, migration, and tubule formation of endothelial cells and reduces vascular leakage. Upon heterologous expression, inhibits the adhesion of endothelial cell to the extracellular matrix (ECM), and inhibits the reorganization of the actin cytoskeleton, formation of actin stress fibers and focal adhesions in endothelial cells that have adhered to ANGPTL4-containing ECM (in vitro). Depending on context, may modulate tumor-related angiogenesis. In terms of biological role, mediates inactivation of the lipoprotein lipase LPL, and thereby plays an important role in the regulation of triglyceride clearance from the blood serum and in lipid metabolism. Has higher activity in LPL inactivation than the uncleaved protein. This is Angiopoietin-related protein 4 (ANGPTL4) from Bos taurus (Bovine).